Here is a 472-residue protein sequence, read N- to C-terminus: Arabinose-proton symporter (472 aa).

Residues Met1–Ala29 are Cytoplasmic-facing. Residues Ala30–Ile50 traverse the membrane as a helical segment. Topologically, residues Thr51–Trp63 are periplasmic. The chain crosses the membrane as a helical span at residues Val64–Phe84. The Cytoplasmic portion of the chain corresponds to Arg85 to Ser91. Residues Leu92 to Val112 form a helical membrane-spanning segment. Topologically, residues Glu113–Met114 are periplasmic. Residues Leu115–Leu135 form a helical membrane-spanning segment. At Tyr136–Gln154 the chain is on the cytoplasmic side. The chain crosses the membrane as a helical span at residues Leu155–Gly175. Topologically, residues Asn176–Arg178 are periplasmic. Residues Ala179 to Pro199 form a helical membrane-spanning segment. Residues Asn200–Arg257 lie on the Cytoplasmic side of the membrane. A helical transmembrane segment spans residues Ala258–Met278. Topologically, residues Tyr279–Met297 are periplasmic. Residues Ile298–Val318 traverse the membrane as a helical segment. At Asp319–Pro325 the chain is on the cytoplasmic side. A helical membrane pass occupies residues Ala326 to Met346. Topologically, residues Gln347–Ser361 are periplasmic. A helical transmembrane segment spans residues Val362–Ile382. The Cytoplasmic portion of the chain corresponds to Leu383–Asn404. Transmembrane regions (helical) follow at residues Trp405 to Ala425 and Gly426 to Ile446. Over Pro447 to Val472 the chain is Cytoplasmic.

This sequence belongs to the major facilitator superfamily. Sugar transporter (TC 2.A.1.1) family.

It is found in the cell inner membrane. The catalysed reaction is L-arabinose(in) + H(+)(in) = L-arabinose(out) + H(+)(out). Uptake of L-arabinose across the cytoplasmic membrane with the concomitant transport of protons into the cell (symport system). The sequence is that of Arabinose-proton symporter (araE) from Escherichia coli O157:H7.